Reading from the N-terminus, the 464-residue chain is Juvenile hormone epoxide hydrolase 1 (464 aa).

Residues 7-27 (MLIFAAIAGIAVLYYQITKEL) traverse the membrane as a helical segment. Asp-224 functions as the Nucleophile in the catalytic mechanism. Catalysis depends on Tyr-370, which acts as the Proton donor. His-427 acts as the Proton acceptor in catalysis.

It belongs to the peptidase S33 family. In terms of tissue distribution, developing oocytes, fat body and midgut epithelium of adults.

The protein localises to the microsome membrane. The protein resides in the endoplasmic reticulum membrane. The catalysed reaction is cis-stilbene oxide + H2O = (1R,2R)-hydrobenzoin. It carries out the reaction 1-(4-methoxyphenyl)-N-methyl-N-[(3-methyloxetan-3-yl)methyl]methanamine + H2O = 2-{[(4-methoxybenzyl)(methyl)amino]methyl}-2-methylpropane-1,3-diol. Its function is as follows. Catalyzes juvenile hormone hydrolysis. The polypeptide is Juvenile hormone epoxide hydrolase 1 (Ctenocephalides felis (Cat flea)).